A 305-amino-acid polypeptide reads, in one-letter code: Cyclin-dependent kinase 3 (305 aa).

One can recognise a Protein kinase domain in the interval 4–286 (FQKVEKIGEG…AKTALAHPYF (283 aa)). Residues 10–18 (IGEGTYGVV) and Lys33 each bind ATP. Residue Asp127 is the Proton acceptor of the active site.

This sequence belongs to the protein kinase superfamily. CMGC Ser/Thr protein kinase family. CDC2/CDKX subfamily. Interacts with CABLES1 and CABLES2. Interacts with ATF1. Binding to CCNC/cyclin-C promotes RB1 phosphorylation. As to expression, expressed in cancer cell lines and glioblastoma tissue.

The enzyme catalyses L-seryl-[protein] + ATP = O-phospho-L-seryl-[protein] + ADP + H(+). It catalyses the reaction L-threonyl-[protein] + ATP = O-phospho-L-threonyl-[protein] + ADP + H(+). Its function is as follows. Serine/threonine-protein kinase that plays a critical role in the control of the eukaryotic cell cycle; involved in G0-G1 and G1-S cell cycle transitions. Interacts with CCNC/cyclin-C during interphase. Phosphorylates histone H1, ATF1, RB1 and CABLES1. ATF1 phosphorylation triggers ATF1 transactivation and transcriptional activities, and promotes cell proliferation and transformation. CDK3/cyclin-C mediated RB1 phosphorylation is required for G0-G1 transition. Promotes G1-S transition probably by contributing to the activation of E2F1, E2F2 and E2F3 in a RB1-independent manner. This Homo sapiens (Human) protein is Cyclin-dependent kinase 3 (CDK3).